The following is a 335-amino-acid chain: UPF0353 protein Mvan_2751 (335 aa).

2 helical membrane passes run 18-38 (WFFL…IVQM) and 67-87 (LPAV…AGPT). In terms of domain architecture, VWFA spans 98–294 (VVMLVIDVSQ…EQLKQVFTNL (197 aa)). Residues 309–329 (VGWLRIGSLVLALAALGALLI) traverse the membrane as a helical segment.

This sequence belongs to the UPF0353 family.

It localises to the cell membrane. The protein is UPF0353 protein Mvan_2751 of Mycolicibacterium vanbaalenii (strain DSM 7251 / JCM 13017 / BCRC 16820 / KCTC 9966 / NRRL B-24157 / PYR-1) (Mycobacterium vanbaalenii).